The following is a 263-amino-acid chain: ATP synthase subunit delta (263 aa).

This sequence belongs to the ATPase delta chain family. In terms of assembly, F-type ATPases have 2 components, F(1) - the catalytic core - and F(0) - the membrane proton channel. F(1) has five subunits: alpha(3), beta(3), gamma(1), delta(1), epsilon(1). F(0) has three main subunits: a(1), b(2) and c(10-14). The alpha and beta chains form an alternating ring which encloses part of the gamma chain. F(1) is attached to F(0) by a central stalk formed by the gamma and epsilon chains, while a peripheral stalk is formed by the delta and b chains.

It localises to the cell membrane. Functionally, f(1)F(0) ATP synthase produces ATP from ADP in the presence of a proton or sodium gradient. F-type ATPases consist of two structural domains, F(1) containing the extramembraneous catalytic core and F(0) containing the membrane proton channel, linked together by a central stalk and a peripheral stalk. During catalysis, ATP synthesis in the catalytic domain of F(1) is coupled via a rotary mechanism of the central stalk subunits to proton translocation. In terms of biological role, this protein is part of the stalk that links CF(0) to CF(1). It either transmits conformational changes from CF(0) to CF(1) or is implicated in proton conduction. In Cutibacterium acnes (strain DSM 16379 / KPA171202) (Propionibacterium acnes), this protein is ATP synthase subunit delta.